We begin with the raw amino-acid sequence, 154 residues long: MSATRAKKVKMATKSCPECDQQVPVACKSCPCGYIFISRKLLNAKHPEKAPSSTENKHEAKRRRTERVRREKINSTVNKDLENRKRSRSNSHSDHIRRGRGRPKSASAKKHEEEREKQEKEIDIYANLSDEKAFVFSVALAEINRKIINQRLIL.

Residues His46–Glu119 form a disordered region. Basic and acidic residues predominate over residues Val68–Arg84. Phosphoserine is present on Ser91. A coiled-coil region spans residues Lys104–Lys132. Basic and acidic residues predominate over residues Lys109–Glu119.

This sequence belongs to the UPF0547 family.

This is UPF0547 protein C16orf87 homolog from Bos taurus (Bovine).